A 968-amino-acid chain; its full sequence is RNA polymerase-associated protein RapA (968 aa).

The Helicase ATP-binding domain occupies 164 to 334 (DVGRRHAPRV…FARLRLLDPN (171 aa)). 177-184 (DEVGLGKT) is an ATP binding site. The short motif at 280–283 (DEAH) is the DEAH box element. Residues 490–685 (RVEWLMGYLT…ALKAQLEQGR (196 aa)) enclose the Helicase C-terminal domain.

This sequence belongs to the SNF2/RAD54 helicase family. RapA subfamily. As to quaternary structure, interacts with the RNAP. Has a higher affinity for the core RNAP than for the holoenzyme. Its ATPase activity is stimulated by binding to RNAP.

Its function is as follows. Transcription regulator that activates transcription by stimulating RNA polymerase (RNAP) recycling in case of stress conditions such as supercoiled DNA or high salt concentrations. Probably acts by releasing the RNAP, when it is trapped or immobilized on tightly supercoiled DNA. Does not activate transcription on linear DNA. Probably not involved in DNA repair. In Salmonella paratyphi C (strain RKS4594), this protein is RNA polymerase-associated protein RapA.